The chain runs to 201 residues: MSSLRQSEIKRKTNETDISVFINLDGNGISEIDTGIPFLDHMLHQISSHGLFDLKIRAIGDTHIDDHHTNEDVGIALGKAFSKALGERKGICRFGHFFAPLDEALVQVTLDCSGRPHLSYDLQLKAPRIGNYDTELVKEFFIAFVNNSGITLHINQIRGSNSHHIVEACFKAFSRAMRMATEIDLRRSGSIPSSKGMLENQ.

It belongs to the imidazoleglycerol-phosphate dehydratase family.

It localises to the cytoplasm. It carries out the reaction D-erythro-1-(imidazol-4-yl)glycerol 3-phosphate = 3-(imidazol-4-yl)-2-oxopropyl phosphate + H2O. It functions in the pathway amino-acid biosynthesis; L-histidine biosynthesis; L-histidine from 5-phospho-alpha-D-ribose 1-diphosphate: step 6/9. The sequence is that of Imidazoleglycerol-phosphate dehydratase from Prochlorococcus marinus (strain MIT 9301).